The chain runs to 218 residues: uncharacterized protein (218 aa).

The protein belongs to the mimivirus L6/L7/L57 family.

This is an uncharacterized protein from Acanthamoeba polyphaga mimivirus (APMV).